The chain runs to 547 residues: uncharacterized protein (547 aa).

Residues Met1 to Ser21 lie on the Extracellular side of the membrane. Residues Phe22–Ala42 form a helical membrane-spanning segment. Topologically, residues Pro43 to Lys58 are cytoplasmic. The helical transmembrane segment at Leu59–Asp79 threads the bilayer. The Extracellular segment spans residues Arg80–Lys83. The helical transmembrane segment at Leu84–Tyr104 threads the bilayer. Over Lys105–Ser110 the chain is Cytoplasmic. A helical transmembrane segment spans residues Thr111 to Ala131. Residues Ser132–Arg144 lie on the Extracellular side of the membrane. A helical membrane pass occupies residues Gly145–Leu165. Topologically, residues Cys166–Glu175 are cytoplasmic. Residues His176–Leu196 traverse the membrane as a helical segment. At Asp197 to Tyr323 the chain is on the extracellular side. Ser237 is modified (phosphoserine). A disordered region spans residues Leu275–Asn300. A helical transmembrane segment spans residues Ile324–Val344. The Cytoplasmic segment spans residues Gln345–Leu398. A helical membrane pass occupies residues Trp399–Phe419. The Extracellular portion of the chain corresponds to Ser420–Ser437. Residues Val438–Val458 traverse the membrane as a helical segment. Residues Ala459 to Thr469 are Cytoplasmic-facing. Residues Leu470 to Gly490 form a helical membrane-spanning segment. Over Arg491–Thr514 the chain is Extracellular. The helical transmembrane segment at Phe515–Tyr535 threads the bilayer. Over Thr536–Leu547 the chain is Cytoplasmic.

The protein resides in the membrane. This is an uncharacterized protein from Saccharomyces cerevisiae (strain ATCC 204508 / S288c) (Baker's yeast).